Reading from the N-terminus, the 168-residue chain is Transcription antitermination protein NusB (168 aa).

The disordered stretch occupies residues 147–168 (RGLINNSSRNTSRSEEKHSTEK). Positions 158–168 (SRSEEKHSTEK) are enriched in basic and acidic residues.

The protein belongs to the NusB family.

In terms of biological role, involved in transcription antitermination. Required for transcription of ribosomal RNA (rRNA) genes. Binds specifically to the boxA antiterminator sequence of the ribosomal RNA (rrn) operons. The chain is Transcription antitermination protein NusB from Chlorobium phaeobacteroides (strain BS1).